Here is a 439-residue protein sequence, read N- to C-terminus: O-fucosyltransferase 13 (439 aa).

The helical; Signal-anchor for type II membrane protein transmembrane segment at proline 8–serine 28 threads the bilayer. 2 N-linked (GlcNAc...) asparagine glycosylation sites follow: asparagine 104 and asparagine 119. Histidine 238–arginine 240 provides a ligand contact to substrate. The N-linked (GlcNAc...) asparagine glycan is linked to asparagine 293.

The protein belongs to the glycosyltransferase GT106 family.

The protein localises to the membrane. It participates in glycan metabolism. This is O-fucosyltransferase 13 from Arabidopsis thaliana (Mouse-ear cress).